A 284-amino-acid polypeptide reads, in one-letter code: Bifunctional protein FolD (284 aa).

NADP(+)-binding positions include Gly-165 to Ser-167 and Ser-190.

This sequence belongs to the tetrahydrofolate dehydrogenase/cyclohydrolase family. As to quaternary structure, homodimer.

It carries out the reaction (6R)-5,10-methylene-5,6,7,8-tetrahydrofolate + NADP(+) = (6R)-5,10-methenyltetrahydrofolate + NADPH. The catalysed reaction is (6R)-5,10-methenyltetrahydrofolate + H2O = (6R)-10-formyltetrahydrofolate + H(+). Its pathway is one-carbon metabolism; tetrahydrofolate interconversion. In terms of biological role, catalyzes the oxidation of 5,10-methylenetetrahydrofolate to 5,10-methenyltetrahydrofolate and then the hydrolysis of 5,10-methenyltetrahydrofolate to 10-formyltetrahydrofolate. The sequence is that of Bifunctional protein FolD from Streptococcus uberis (strain ATCC BAA-854 / 0140J).